The sequence spans 285 residues: Phycobilisome 31.6 kDa linker polypeptide, phycocyanin-associated, rod (285 aa).

The region spanning 1–180 is the PBS-linker domain; it reads MPITTAASRL…LYRGYATSDR (180 aa).

The protein belongs to the phycobilisome linker protein family.

Its subcellular location is the cellular thylakoid membrane. Functionally, rod linker protein, associated with phycocyanin. Linker polypeptides determine the state of aggregation and the location of the disk-shaped phycobiliprotein units within the phycobilisome and modulate their spectroscopic properties in order to mediate a directed and optimal energy transfer. In Microchaete diplosiphon (Fremyella diplosiphon), this protein is Phycobilisome 31.6 kDa linker polypeptide, phycocyanin-associated, rod (cpcI3).